We begin with the raw amino-acid sequence, 788 residues long: Probable phosphoketolase 1 (788 aa).

Belongs to the XFP family. Thiamine diphosphate serves as cofactor.

This Lactiplantibacillus plantarum (strain ATCC BAA-793 / NCIMB 8826 / WCFS1) (Lactobacillus plantarum) protein is Probable phosphoketolase 1.